A 504-amino-acid polypeptide reads, in one-letter code: Cytochrome P450 2K1 (504 aa).

Position 447 (C447) interacts with heme.

The protein belongs to the cytochrome P450 family. Heme serves as cofactor.

It is found in the endoplasmic reticulum membrane. The protein resides in the microsome membrane. It catalyses the reaction an organic molecule + reduced [NADPH--hemoprotein reductase] + O2 = an alcohol + oxidized [NADPH--hemoprotein reductase] + H2O + H(+). This is Cytochrome P450 2K1 (cyp2k1) from Oncorhynchus mykiss (Rainbow trout).